We begin with the raw amino-acid sequence, 233 residues long: Large ribosomal subunit protein uL1 (233 aa).

This sequence belongs to the universal ribosomal protein uL1 family. Part of the 50S ribosomal subunit.

Its function is as follows. Binds directly to 23S rRNA. The L1 stalk is quite mobile in the ribosome, and is involved in E site tRNA release. Functionally, protein L1 is also a translational repressor protein, it controls the translation of the L11 operon by binding to its mRNA. The polypeptide is Large ribosomal subunit protein uL1 (Shewanella baltica (strain OS185)).